The sequence spans 70 residues: Large ribosomal subunit protein eL38 (70 aa).

Belongs to the eukaryotic ribosomal protein eL38 family.

The chain is Large ribosomal subunit protein eL38 (RpL38) from Drosophila melanogaster (Fruit fly).